The chain runs to 439 residues: Dihydroorotase (439 aa).

2 residues coordinate Zn(2+): His65 and His67. Residues His67 to Arg69 and Asn99 contribute to the substrate site. Residues Asp156, His183, His246, and Asp321 each contribute to the Zn(2+) site. Asp321 is a catalytic residue. Residues His325 and Phe339–Gly340 contribute to the substrate site.

Belongs to the metallo-dependent hydrolases superfamily. DHOase family. Class I DHOase subfamily. Zn(2+) serves as cofactor.

The catalysed reaction is (S)-dihydroorotate + H2O = N-carbamoyl-L-aspartate + H(+). The protein operates within pyrimidine metabolism; UMP biosynthesis via de novo pathway; (S)-dihydroorotate from bicarbonate: step 3/3. Functionally, catalyzes the reversible cyclization of carbamoyl aspartate to dihydroorotate. The polypeptide is Dihydroorotase (Chlorobaculum tepidum (strain ATCC 49652 / DSM 12025 / NBRC 103806 / TLS) (Chlorobium tepidum)).